Here is a 276-residue protein sequence, read N- to C-terminus: Mitochondrial outer membrane protein porin 2 (276 aa).

Ser-76 carries the phosphoserine modification. At Thr-236 the chain carries Phosphothreonine.

Belongs to the eukaryotic mitochondrial porin (TC 1.B.8.1) family. Expressed in root tips, steles, leaves, sepals, petals, stamen and pistils.

Its subcellular location is the mitochondrion outer membrane. In terms of biological role, forms a channel through the mitochondrial outer membrane that allows diffusion of small hydrophilic molecules. The channel adopts an open conformation at low or zero membrane potential and a closed conformation at potentials above 30-40 mV. The open state has a weak anion selectivity whereas the closed state is cation-selective. Involved in plant growth and development at the vegetative and reproductive stages. Is important for leaf and pollen development and mitochondrial membrane potential steady state. May be involved in ABA-mediated early seedling development and disease resistance. This chain is Mitochondrial outer membrane protein porin 2 (VDAC2), found in Arabidopsis thaliana (Mouse-ear cress).